A 702-amino-acid polypeptide reads, in one-letter code: MHWMLLVSLLLLLWLLVASPRLAWLKAGLLSLFLLLLSAWGLVDRLSGDGINAATLYHLRADMDGAGVSDFSGYIAVFVGMLLLSLSPLLLVRIRRFQRPRGGGAVFAGFVGMLLVGIAASPLYRDGKRLYYQLRPVDYATVVPEYQVPQQPLHKRKNIVWIYGESLERTYFDEQVFPGLMPNLRAVATEAVDVRNLASTEGSGWTIAGMVASMCGVPLTTAPGDENSMDRMGMFLPEARCLGDYLKDQGYRNHYVGGADASFAGKGRFLSSHGFDVVHDVHYFQDQGVAPKHFSAWGVHDDVLLDDAWDTFQTLSRAGQPFLLTTLTMDTHHPAGHLPSACKGQQYDSPLGDIGLLHAIKCSDRLIGELVARIRNSRYGKNTIIVIASDHLAMPNDLSDVLAKQKRENLLLFLGEDIAPQQVVTRAGSTLDSGATLLQLLEPGMRTLGFGRSFLASDAPPSASAAASRDSGKDYPRYLAYARTLWTGRSTRMLRINGNGDVVVGVQQVRPPVLLEYDKDTNLKTVYLENTSRQFDRTHSKGTLAYVDRCTAFEDGSADGDWCALVVDRHQSMKLYRDPDLARGIAIDAPLEATQQGPRPRVRQPIMLTQAARKTDAGRYMLELYAKRRPTRAFWVEAVSSERKVVLAQQWVVPDAAGRIRMPVGLEHAVEDLEIRAWLDYTEDVSVDDLALVKDIPVADRS.

3 helical membrane passes run 5–24 (LLVSLLLLLWLLVASPRLAW), 73–95 (GYIAVFVGMLLLSLSPLLLVRIR), and 102–124 (GGGAVFAGFVGMLLVGIAASPLY).

The protein belongs to the OpgB family.

Its subcellular location is the cell inner membrane. It catalyses the reaction a phosphatidylglycerol + a membrane-derived-oligosaccharide D-glucose = a 1,2-diacyl-sn-glycerol + a membrane-derived-oligosaccharide 6-(glycerophospho)-D-glucose.. It participates in glycan metabolism; osmoregulated periplasmic glucan (OPG) biosynthesis. Functionally, transfers a phosphoglycerol residue from phosphatidylglycerol to the membrane-bound nascent glucan backbones. The chain is Phosphoglycerol transferase I from Xanthomonas axonopodis pv. citri (strain 306).